Here is an 89-residue protein sequence, read N- to C-terminus: Small ribosomal subunit protein uS15 (89 aa).

This sequence belongs to the universal ribosomal protein uS15 family. As to quaternary structure, part of the 30S ribosomal subunit. Forms a bridge to the 50S subunit in the 70S ribosome, contacting the 23S rRNA.

One of the primary rRNA binding proteins, it binds directly to 16S rRNA where it helps nucleate assembly of the platform of the 30S subunit by binding and bridging several RNA helices of the 16S rRNA. Functionally, forms an intersubunit bridge (bridge B4) with the 23S rRNA of the 50S subunit in the ribosome. The chain is Small ribosomal subunit protein uS15 from Chlorobaculum parvum (strain DSM 263 / NCIMB 8327) (Chlorobium vibrioforme subsp. thiosulfatophilum).